Here is a 143-residue protein sequence, read N- to C-terminus: Hemoglobin subunit alpha (143 aa).

N-acetylserine is present on Ser2. The Globin domain maps to Ser2 to Arg143. An O2-binding site is contributed by His60. His89 lines the heme b pocket.

The protein belongs to the globin family. As to quaternary structure, heterotetramer of two alpha chains and two beta chains. As to expression, red blood cells.

Its function is as follows. Involved in oxygen transport from the lung to the various peripheral tissues. This Artedidraco orianae (Barbeled plunderfish) protein is Hemoglobin subunit alpha (hba).